The primary structure comprises 116 residues: Class I hydrophobin 1 (116 aa).

Residues 1-19 (MLFKQAILVATTLTTLAVA) form the signal peptide. Cystine bridges form between Cys35/Cys95, Cys42/Cys89, Cys43/Cys76, and Cys96/Cys109. N-linked (GlcNAc...) asparagine glycans are attached at residues Asn44 and Asn100.

Belongs to the fungal hydrophobin family. Self-assembles to form functional amyloid fibrils called rodlets. Self-assembly into fibrillar rodlets occurs spontaneously at hydrophobic:hydrophilic interfaces and the rodlets further associate laterally to form amphipathic monolayers.

The protein resides in the secreted. It is found in the cell wall. In terms of biological role, aerial growth, conidiation, and dispersal of filamentous fungi in the environment rely upon a capability of their secreting small amphipathic proteins called hydrophobins (HPBs) with low sequence identity. Class I can self-assemble into an outermost layer of rodlet bundles on aerial cell surfaces, conferring cellular hydrophobicity that supports fungal growth, development and dispersal; whereas Class II form highly ordered films at water-air interfaces through intermolecular interactions but contribute nothing to the rodlet structure. In Pleurotus ostreatus (strain PC15) (Oyster mushroom), this protein is Class I hydrophobin 1.